A 562-amino-acid polypeptide reads, in one-letter code: Non-homologous end joining factor IFFO1 (562 aa).

Residues 65–116 are LMNA binding; that stretch reads ALRNDLGSNINVLKTLNLRFRCFLAKVHELERRNRLLEKQLQQALEEGKQGR. The 457-residue stretch at 73-529 folds into the IF rod domain; it reads NINVLKTLNL…RLITQSGDRK (457 aa). Residues 85 to 117 are a coiled coil; that stretch reads RCFLAKVHELERRNRLLEKQLQQALEEGKQGRR. The segment at 154 to 187 is disordered; it reads RVLGSPSRSPAGPLASSAACHTSSSTSTSTAFSS. Residues 168-187 show a composition bias toward low complexity; that stretch reads ASSAACHTSSSTSTSTAFSS. Residues 237–301 are a coiled coil; the sequence is EIRALYNVLA…MKVEQLKAEL (65 aa). Residues 364 to 401 are disordered; the sequence is MGGRKRERKAAVEEDTSLSESDGPRQPEGAEEESTALS. Residues 453–528 form an XCCR4 binding. Required for localization to the double-strand breaks (DSBs) region; sequence EQEDSLEKVI…RRLITQSGDR (76 aa). The stretch at 458 to 504 forms a coiled coil; it reads LEKVIKDTESLFKTREKEYQETIDQIELELATAKNDMNRHLHEYMEM. Positions 523–562 are disordered; the sequence is TQSGDRKSPAFTAVPLSDPPPPPSETEDSDRDVSSDSSMR. Residues 553-562 are compositionally biased toward basic and acidic residues; the sequence is RDVSSDSSMR.

Belongs to the intermediate filament family. Forms a heterotetramer with XRCC4. The interaction with XRCC4 is direct, involves LIG4-free XRCC4 and leads to relocalization of IFFO1 at the double-strand break (DSB) sites. Interacts with LMNA; the interaction forms an interior nucleoskeleton and the recruitment to DNA double-strand breaks.

The protein localises to the nucleus. It localises to the nucleoplasm. The protein resides in the nucleus inner membrane. Its subcellular location is the nucleus matrix. Its function is as follows. Nuclear matrix protein involved in the immobilization of broken DNA ends and the suppression of chromosome translocation during DNA double-strand breaks (DSBs). Interacts with the nuclear lamina component LMNA, resulting in the formation of a nucleoskeleton that will relocalize to the DSB sites in a XRCC4-dependent manner and promote the immobilization of the broken ends, thereby preventing chromosome translocation. Acts as a scaffold that allows the DNA repair protein XRCC4 and LMNA to assemble into a complex at the DSB sites. This Mus musculus (Mouse) protein is Non-homologous end joining factor IFFO1.